Here is a 107-residue protein sequence, read N- to C-terminus: Thioredoxin (107 aa).

The 106-residue stretch at 2 to 107 (SEVLHINDAD…QLANFINQHI (106 aa)) folds into the Thioredoxin domain. A disulfide bond links cysteine 32 and cysteine 35.

This sequence belongs to the thioredoxin family.

Functionally, participates in various redox reactions through the reversible oxidation of its active center dithiol to a disulfide and catalyzes dithiol-disulfide exchange reactions. This is Thioredoxin (trxA) from Haemophilus influenzae (strain ATCC 51907 / DSM 11121 / KW20 / Rd).